Reading from the N-terminus, the 247-residue chain is LOB domain-containing protein 38 (247 aa).

The LOB domain maps to 1 to 107 (MSCNGCRVLR…VETVLRGGSL (107 aa)). Residues 157–170 (FSSSRSRSRSTASP) show a composition bias toward low complexity. The interval 157–184 (FSSSRSRSRSTASPPKRKRLSSEQQPSS) is disordered.

The protein belongs to the LOB domain-containing protein family. Expressed in young shoots, roots, stems, leaves and flowers.

This chain is LOB domain-containing protein 38 (LBD38), found in Arabidopsis thaliana (Mouse-ear cress).